Reading from the N-terminus, the 588-residue chain is Catechol oxidase B, chloroplastic (588 aa).

The N-terminal 88 residues, 1-88 (SSSSTTTIPL…AANLAPLASA (88 aa)), are a transit peptide targeting the chloroplast. Disulfide bonds link C99–C115 and C114–C181. Cu cation is bound by residues H180, H198, H207, H329, H333, and H364. Residues 184 to 198 (CNGAYKVGGKELQVH) constitute a cross-link (2'-(S-cysteinyl)-histidine (Cys-His)).

It belongs to the tyrosinase family. Requires Cu(2+) as cofactor.

The protein localises to the plastid. Its subcellular location is the chloroplast thylakoid lumen. It carries out the reaction 2 catechol + O2 = 2 1,2-benzoquinone + 2 H2O. Catalyzes the oxidation of mono- and o-diphenols to o-diquinones. The polypeptide is Catechol oxidase B, chloroplastic (Solanum tuberosum (Potato)).